Consider the following 66-residue polypeptide: Putative alpha-neurotoxin RjAa13 (66 aa).

In terms of domain architecture, LCN-type CS-alpha/beta spans 1-60 (KEGYPVDWGNCKYECMSDAYCKDLCVDRKAKSGYCYKLNWSCYCEGLPDDSPIKTNGHCR). Cystine bridges form between Cys-11–Cys-59, Cys-15–Cys-35, Cys-21–Cys-42, and Cys-25–Cys-44.

This sequence belongs to the long (4 C-C) scorpion toxin superfamily. Sodium channel inhibitor family. Alpha subfamily. Expressed by the venom gland.

Its subcellular location is the secreted. In terms of biological role, alpha toxins bind voltage-independently at site-3 of sodium channels (Nav) and inhibits the inactivation of the activated channels, thereby blocking neuronal transmission. The chain is Putative alpha-neurotoxin RjAa13 from Rhopalurus junceus (Caribbean blue scorpion).